A 535-amino-acid polypeptide reads, in one-letter code: Cytochrome P450 monooxygenase atE (535 aa).

Cys-455 lines the heme pocket.

Belongs to the cytochrome P450 family. Heme serves as cofactor.

It catalyses the reaction 3-methylcatechol + AH2 + O2 = 3-methylbenzene-1,2,4-triol + A + H2O. It participates in secondary metabolite biosynthesis. Its function is as follows. Cytochrome P450 monooxygenase; part of the gene cluster that mediates the biosynthesis of terreic acid, a quinone epoxide inhibitor of Bruton's tyrosine kinase. The first step of the pathway is the synthesis of 6-methylsalicylic acid (6-MSA) by the 6-methylsalicylic acid synthase atX. In the biosynthesis of 6-MSA, atX utilizes one acetyl-CoA and three malonyl-CoAs as its substrates and catalyzes a series of programmed reactions including Claisen condensation, reduction, aldol cyclization, and the hydrolytic cleavage that yields 6-MSA. The 6-methylsalicylate 1-monooxygenase atA then catalyzes the decarboxylative hydroxylation of 6-MSA to 3-methylcatechol. The next step is the conversion of 3-methylcatechol to 3-methyl-1,2,4-benzenetriol by cytochrome P450 monooxygenase atE, which is enhanced by cytochrome P450 monooxygenase atG. Then, the epoxidase atD catalyzes the epoxidation and hydroxyl oxidation of 3-methyl-1,2,4-benzenetriol to terremutin. Lastly, GMC oxidoreductase atC oxidizes terremutin to terreic acid. The protein is Cytochrome P450 monooxygenase atE of Aspergillus terreus (strain NIH 2624 / FGSC A1156).